The sequence spans 139 residues: Holo-[acyl-carrier-protein] synthase (139 aa).

Mg(2+)-binding residues include D8 and E61.

It belongs to the P-Pant transferase superfamily. AcpS family. Mg(2+) serves as cofactor.

It localises to the cytoplasm. It catalyses the reaction apo-[ACP] + CoA = holo-[ACP] + adenosine 3',5'-bisphosphate + H(+). Transfers the 4'-phosphopantetheine moiety from coenzyme A to a Ser of acyl-carrier-protein. This Nitrobacter winogradskyi (strain ATCC 25391 / DSM 10237 / CIP 104748 / NCIMB 11846 / Nb-255) protein is Holo-[acyl-carrier-protein] synthase.